The chain runs to 200 residues: Holliday junction branch migration complex subunit RuvA (200 aa).

Residues 1-63 (MIALVQGRVA…EDSLTLFGFA (63 aa)) are domain I. Residues 64 to 138 (DADERDVFEL…DRLGPAQGAA (75 aa)) form a domain II region. Residues 138-142 (APAAP) are flexible linker. Residues 143–200 (VAVDDGADVVDALVGLGWPVRQAQDAVRGVLEDADGTAPDAAGLLRAALRSLAGDARG) form a domain III region.

This sequence belongs to the RuvA family. As to quaternary structure, homotetramer. Forms an RuvA(8)-RuvB(12)-Holliday junction (HJ) complex. HJ DNA is sandwiched between 2 RuvA tetramers; dsDNA enters through RuvA and exits via RuvB. An RuvB hexamer assembles on each DNA strand where it exits the tetramer. Each RuvB hexamer is contacted by two RuvA subunits (via domain III) on 2 adjacent RuvB subunits; this complex drives branch migration. In the full resolvosome a probable DNA-RuvA(4)-RuvB(12)-RuvC(2) complex forms which resolves the HJ.

The protein resides in the cytoplasm. Functionally, the RuvA-RuvB-RuvC complex processes Holliday junction (HJ) DNA during genetic recombination and DNA repair, while the RuvA-RuvB complex plays an important role in the rescue of blocked DNA replication forks via replication fork reversal (RFR). RuvA specifically binds to HJ cruciform DNA, conferring on it an open structure. The RuvB hexamer acts as an ATP-dependent pump, pulling dsDNA into and through the RuvAB complex. HJ branch migration allows RuvC to scan DNA until it finds its consensus sequence, where it cleaves and resolves the cruciform DNA. The polypeptide is Holliday junction branch migration complex subunit RuvA (Beutenbergia cavernae (strain ATCC BAA-8 / DSM 12333 / CCUG 43141 / JCM 11478 / NBRC 16432 / NCIMB 13614 / HKI 0122)).